We begin with the raw amino-acid sequence, 135 residues long: ATP synthase epsilon chain (135 aa).

The protein belongs to the ATPase epsilon chain family. In terms of assembly, F-type ATPases have 2 components, CF(1) - the catalytic core - and CF(0) - the membrane proton channel. CF(1) has five subunits: alpha(3), beta(3), gamma(1), delta(1), epsilon(1). CF(0) has three main subunits: a, b and c.

It localises to the cell inner membrane. Produces ATP from ADP in the presence of a proton gradient across the membrane. In Nitrobacter winogradskyi (strain ATCC 25391 / DSM 10237 / CIP 104748 / NCIMB 11846 / Nb-255), this protein is ATP synthase epsilon chain.